The primary structure comprises 356 residues: Ferredoxin--NADP reductase (356 aa).

Thr-25, Glu-44, Gln-52, Tyr-57, Val-97, Phe-132, Asp-298, and Ser-339 together coordinate FAD.

The protein belongs to the ferredoxin--NADP reductase type 2 family. In terms of assembly, homodimer. Requires FAD as cofactor.

The enzyme catalyses 2 reduced [2Fe-2S]-[ferredoxin] + NADP(+) + H(+) = 2 oxidized [2Fe-2S]-[ferredoxin] + NADPH. In Chlorobaculum parvum (strain DSM 263 / NCIMB 8327) (Chlorobium vibrioforme subsp. thiosulfatophilum), this protein is Ferredoxin--NADP reductase.